Reading from the N-terminus, the 266-residue chain is uncharacterized protein (266 aa).

A signal peptide spans 1–22; sequence MRYLKKLAWFISVIILGIFIIG. C23 carries N-palmitoyl cysteine lipidation. C23 is lipidated: S-diacylglycerol cysteine.

This sequence belongs to the staphylococcal tandem lipoprotein family.

It localises to the cell membrane. This is an uncharacterized protein from Staphylococcus aureus (strain USA300).